We begin with the raw amino-acid sequence, 388 residues long: Xylose isomerase (388 aa).

Residues histidine 54 and aspartate 57 contribute to the active site. Glutamate 181, glutamate 217, histidine 220, aspartate 245, aspartate 255, aspartate 257, and aspartate 287 together coordinate Mg(2+).

The protein belongs to the xylose isomerase family. As to quaternary structure, homotetramer. It depends on Mg(2+) as a cofactor.

The protein localises to the cytoplasm. The catalysed reaction is alpha-D-xylose = alpha-D-xylulofuranose. This Streptomyces thermocyaneoviolaceus protein is Xylose isomerase.